We begin with the raw amino-acid sequence, 166 residues long: Large ribosomal subunit protein uL10 (166 aa).

Belongs to the universal ribosomal protein uL10 family. As to quaternary structure, part of the ribosomal stalk of the 50S ribosomal subunit. The N-terminus interacts with L11 and the large rRNA to form the base of the stalk. The C-terminus forms an elongated spine to which L12 dimers bind in a sequential fashion forming a multimeric L10(L12)X complex.

In terms of biological role, forms part of the ribosomal stalk, playing a central role in the interaction of the ribosome with GTP-bound translation factors. The chain is Large ribosomal subunit protein uL10 from Aromatoleum aromaticum (strain DSM 19018 / LMG 30748 / EbN1) (Azoarcus sp. (strain EbN1)).